Consider the following 446-residue polypeptide: Regulator of drug sensitivity 2 (446 aa).

A DNA-binding region (zn(2)-C6 fungal-type) is located at residues 15–45 (KTCLFCKRSHVVCDKQRPCSRCVKRDIAHLC). Disordered regions lie at residues 52-106 (VPNE…PKLD) and 158-218 (ASNV…KEES). Polar residues-rich tracts occupy residues 56–70 (MPSQ…NNIQ) and 84–96 (DYQN…SGST). Residue Ser-102 is modified to Phosphoserine. The span at 160–177 (NVHLENGSQTTQSPLEYQ) shows a compositional bias: polar residues. Residues 178 to 192 (NDNRRDEIGVARQEN) show a composition bias toward basic and acidic residues. Residues 193 to 206 (RSPTIMSGSSNSIS) are compositionally biased toward polar residues. A compositionally biased stretch (basic and acidic residues) spans 207–218 (KGDKQDQEKEES). Thr-231 is modified (phosphothreonine).

In terms of processing, phosphorylated by SNF1 in absence of glucose. The phosphorylation is required for induction of transcription of gluconeogenic genes.

It is found in the cytoplasm. The protein resides in the nucleus. Functionally, transcription factor which regulates the expression of genes for gluconeogenesis, the TCA cycle, and glucose metabolism. Involved in the cell wall remodeling process and drug resistance. This is Regulator of drug sensitivity 2 (RDS2) from Saccharomyces cerevisiae (strain ATCC 204508 / S288c) (Baker's yeast).